Reading from the N-terminus, the 182-residue chain is Ferredoxin-thioredoxin reductase subunit A1, chloroplastic (182 aa).

Residues 1 to 81 (MSSQIALSPA…VAIKSADSIN (81 aa)) constitute a chloroplast transit peptide.

It belongs to the ferredoxin thioredoxin reductase alpha subunit family. As to quaternary structure, heterodimer of subunit A (variable subunit) and subunit B (catalytic subunit). Heterodimeric FTR forms a complex with ferredoxin and thioredoxin.

It localises to the plastid. Its subcellular location is the chloroplast. Its function is as follows. Variable subunit of the ferredoxin-thioredoxin reductase (FTR), which catalyzes the two-electron reduction of thioredoxins by the electrons provided by reduced ferredoxin. The polypeptide is Ferredoxin-thioredoxin reductase subunit A1, chloroplastic (Arabidopsis thaliana (Mouse-ear cress)).